We begin with the raw amino-acid sequence, 899 residues long: Probable disease resistance protein RXW24L (899 aa).

Positions 13 to 50 (DRLSQEYDQFKGVEDQVTELKSNLNLLKSFLKDADAKK) form a coiled coil. The region spanning 143–455 (LQERQREMRH…AEGISERRRY (313 aa)) is the NB-ARC domain. Residue 189–196 (GMGGLGKT) coordinates ATP.

It belongs to the disease resistance NB-LRR family.

In terms of biological role, potential disease resistance protein. In Arabidopsis thaliana (Mouse-ear cress), this protein is Probable disease resistance protein RXW24L (RXW24L).